Consider the following 90-residue polypeptide: Barrier-to-autointegration factor-like protein (90 aa).

This sequence belongs to the BAF family. In terms of assembly, homodimer. Heterodimerizes with BANF1. Expressed strongly in testis and pancreas. Also detected in brain, colon, liver, lung, ovary, placenta, prostate, small intestine, spleen and thymus. Not detected in heart, kidney and skeletal muscle.

It localises to the nucleus. It is found in the cytoplasm. In terms of biological role, may play a role in BANF1 regulation and influence tissue-specific roles of BANF1. The protein is Barrier-to-autointegration factor-like protein (BANF2) of Homo sapiens (Human).